The following is a 286-amino-acid chain: Beta-lactamase SHV-13 (286 aa).

Residues 1–21 form the signal peptide; it reads MRYIRLCIISLLATLPLAVHA. Ser-66 (acyl-ester intermediate) is an active-site residue. Cys-73 and Cys-119 are joined by a disulfide. Glu-164 acts as the Proton acceptor in catalysis. 230–232 is a binding site for substrate; sequence KTG.

This sequence belongs to the class-A beta-lactamase family.

The catalysed reaction is a beta-lactam + H2O = a substituted beta-amino acid. Its activity is regulated as follows. Inhibited 16-fold better by the beta-lactamase inhibitor clavulanic acid than by tazobactam. Broad spectrum beta-lactamase which hydrolyzes penicillins, as well as cephalosporins except cephamycins. Also hydrolyzes aztreonam, but not imipenem. Confers highly resistance to ceftazidime, cefotaxime, aztreonam and piperacillin. The chain is Beta-lactamase SHV-13 (bla) from Klebsiella pneumoniae.